The following is a 328-amino-acid chain: Global transcription regulator sge1 (328 aa).

2 disordered regions span residues 94–120 (PGEKKRAKGKGGKSTTQSGGISKPRQR) and 251–293 (QMHQ…QYVH). Low complexity-rich tracts occupy residues 106–116 (KSTTQSGGISK), 251–261 (QMHQPQVHQPL), and 282–293 (AHQPQVHQQYVH).

This sequence belongs to the MIT1/WOR1 family.

The protein resides in the nucleus. Functionally, global transcriptional regulator of transcription that impacts, but is not absolutely required for secondary metabolism and pathogenicity on maize. Regulates synthesis of multiple secondary metabolites, including fumonisins and fusarins. This chain is Global transcription regulator sge1, found in Gibberella moniliformis (strain M3125 / FGSC 7600) (Maize ear and stalk rot fungus).